We begin with the raw amino-acid sequence, 306 residues long: Stimulator of interferon genes protein 5 (306 aa).

Residues 1–50 form a disordered region; it reads MMSNDSQSEKRTAKWTGSGTPIAEGEESSSPSAHQTRQKATAADDDDDQQ. 2',3'-cGAMP-binding residues include Tyr-119, Arg-180, and Arg-186.

It belongs to the STING family.

In terms of biological role, facilitator of innate immune signaling that acts as a sensor of second messenger signals produced by cyclic GMP-AMP synthase-like receptors (cGLRs) and promotes the production of type I interferon. Innate immune response is triggered in response to nucleotides from viruses and bacteria delivered to the cytoplasm. Acts by binding cyclic dinucleotides: recognizes and binds 2'-3' linked cGAMP (2'-3'-cGAMP), a second messengers produced by cGLRs in response to nucleotides in the cytosol, such as double-stranded RNA (dsRNA). Upon binding to 2'-3'-cGAMP, oligomerizes and promotes the recruitment and subsequent activation of the transcription factor IRF3 to induce expression of type I interferon. This Stylophora pistillata (Smooth cauliflower coral) protein is Stimulator of interferon genes protein 5.